The primary structure comprises 241 residues: Triosephosphate isomerase (241 aa).

Substrate is bound at residue 8–10 (NWK). His-93 functions as the Electrophile in the catalytic mechanism. Glu-163 serves as the catalytic Proton acceptor. Residues Gly-169, Ser-205, and 226–227 (GG) each bind substrate.

It belongs to the triosephosphate isomerase family. In terms of assembly, homodimer.

Its subcellular location is the cytoplasm. It carries out the reaction D-glyceraldehyde 3-phosphate = dihydroxyacetone phosphate. It functions in the pathway carbohydrate biosynthesis; gluconeogenesis. It participates in carbohydrate degradation; glycolysis; D-glyceraldehyde 3-phosphate from glycerone phosphate: step 1/1. Its function is as follows. Involved in the gluconeogenesis. Catalyzes stereospecifically the conversion of dihydroxyacetone phosphate (DHAP) to D-glyceraldehyde-3-phosphate (G3P). The sequence is that of Triosephosphate isomerase from Bdellovibrio bacteriovorus (strain ATCC 15356 / DSM 50701 / NCIMB 9529 / HD100).